We begin with the raw amino-acid sequence, 91 residues long: Small ribosomal subunit protein uS19 (91 aa).

This sequence belongs to the universal ribosomal protein uS19 family.

Its function is as follows. Protein S19 forms a complex with S13 that binds strongly to the 16S ribosomal RNA. The polypeptide is Small ribosomal subunit protein uS19 (Synechococcus sp. (strain CC9902)).